The chain runs to 215 residues: Nascent polypeptide-associated complex subunit alpha (215 aa).

Residues 1–81 (MPGEATETVP…SEKKARKAMS (81 aa)) form a disordered region. Residues 9–28 (VPATEQELPQPQAETGSGTE) show a composition bias toward polar residues. Residues 29–42 (SDSDESVPELEEQD) are compositionally biased toward acidic residues. Ser43 carries the phosphoserine; by ILK1 modification. Positions 44 to 57 (TQATTQQAQLAAAA) are enriched in low complexity. The required for DNA-binding stretch occupies residues 69-80 (QSRSEKKARKAM). The 66-residue stretch at 70–135 (SRSEKKARKA…AKIEDLSQQA (66 aa)) folds into the NAC-A/B domain. The interval 93–108 (RVTIRKSKNILFVITK) is RNA/DNA-binding. Phosphoserine is present on Ser132. Lys142 is subject to N6-acetyllysine; alternate. Lys142 participates in a covalent cross-link: Glycyl lysine isopeptide (Lys-Gly) (interchain with G-Cter in SUMO2); alternate. Thr159 is subject to Phosphothreonine; by GSK3-beta. Position 161 is a phosphothreonine (Thr161). A phosphoserine mark is found at Ser166, Ser186, Ser191, and Ser203. In terms of domain architecture, UBA spans 176 to 213 (VEVKDIELVMSQANVSRAKAVRALKNNSNDIVNAIMEL).

The protein belongs to the NAC-alpha family. Interacts with TBP and JUN. Part of the nascent polypeptide-associated complex (NAC), which is a heterodimer of NACA and BTF3 (via NAC-A/B domains). NAC associates with ribosomes through the BTF3/NACB subunit and contacts the ribosomal protein L23, which is positioned near the exiting site. Both subunits can contact nascent polypeptide chains. NACA may also form homodimers, and only this form binds DNA. Phosphorylation of Thr-159 by GSK3B may promote proteasome mediated degradation. Phosphorylation of Ser-43 by ILK during cell adhesion may promote nuclear localization. In terms of tissue distribution, ubiquitously expressed.

The protein localises to the cytoplasm. It is found in the nucleus. Prevents inappropriate targeting of non-secretory polypeptides to the endoplasmic reticulum (ER). Binds to nascent polypeptide chains as they emerge from the ribosome and blocks their interaction with the signal recognition particle (SRP), which normally targets nascent secretory peptides to the ER. Also reduces the inherent affinity of ribosomes for protein translocation sites in the ER membrane (M sites). May act as a specific coactivator for JUN, binding to DNA and stabilizing the interaction of JUN homodimers with target gene promoters. The protein is Nascent polypeptide-associated complex subunit alpha (NACA) of Homo sapiens (Human).